A 373-amino-acid polypeptide reads, in one-letter code: Dimethylallyltryptophan synthase CymD (373 aa).

Residues Asp-55, Val-56, and Glu-64 each contribute to the L-tryptophan site. The active-site Nucleophile is the Glu-64. Dimethylallyl diphosphate-binding residues include Gln-77, Lys-146, Trp-148, Arg-205, and Lys-207. Arg-211 provides a ligand contact to L-tryptophan. Tyr-274 provides a ligand contact to dimethylallyl diphosphate. Tyr-326 is an L-tryptophan binding site. Dimethylallyl diphosphate-binding residues include Arg-337, Lys-339, and Tyr-341. The FtsK domain occupies 346-373 (MHDVTPPPLGVSQQHHLSGQTTARGRTE).

Dimethylallyltryptophan synthase; part of the gene cluster that mediates the biosynthesis of cyclic heptapeptides, known as cyclomarins and also of cyclic dipeptides, called cyclomarazines, which have both antimicrobial and cytotoxic effects. Catalyzes the reverse N-prenylation of monomeric L-tryptophan with dimethylallyl diphosphate (DMAPP) to form N-(1,1-dimethylallyl)-tryptophan (r-N-DMAT). The formation of r-N-DMAT appears to proceed via the deprotonation of the indole nitrogen of tryptophan, which facilitates a nucleophilic attack on the carbocation that is forming on the dimethylallyl group as the diphosphate dissociates. The N-(1,1-dimethylallyl)-tryptophan produced by CymD is combined with a range of standard and nonproteinogenic amino acid substrates to synthesize the peptides, a process that is probably catalyzed by the non-canonical nonribosomal peptide synthetase (NRPS), CymA. Other proteins in the cluster catalyze further modifications of the peptides including CymV which catalyzes the oxidation of olefinic cyclomarins and cyclomarazines to their respective epoxide derivatives. Utilizes only DMAPP as the prenyl donor and has no requirement for divalent cations. The protein is Dimethylallyltryptophan synthase CymD of Salinispora arenicola (strain CNS-205).